Consider the following 353-residue polypeptide: MKFLDEAKVYIRSGDGGNGCVAFRREKFIEFGGPNGGNGGRGGDVVVEAADGLNTLIDYRYQQHFKAQKGVNGMGSDRHGANGKDIVLKVPVGTQIIDEDKETLLHDFTKVGERFVLAEGGNGGFGNAHFKSSTNRAPRHANPGLPGEERWIWLRLKLIADAGLVGLPNAGKSTFLSKVSAAKPKIADYPFTTLHPQLGVVNSDGREFVLADIPGLIEGAHEGAGLGDRFLGHVERCRVLLHLIDATCEHAGKAYKTVRGELEAYADTLTDKIEIVALNKIDAVEPDELKKQKDRLKRAAKKTPLLISGVTGAGVPEALRALAAVIGEAPVSDKAIGTAQNAADAKPWAPQDV.

An Obg domain is found at 1-159 (MKFLDEAKVY…RWIWLRLKLI (159 aa)). The region spanning 160–327 (ADAGLVGLPN…ALRALAAVIG (168 aa)) is the OBG-type G domain. GTP-binding positions include 166-173 (GLPNAGKS), 191-195 (FTTLH), 212-215 (DIPG), 279-282 (NKID), and 308-310 (SGV). Positions 173 and 193 each coordinate Mg(2+).

Belongs to the TRAFAC class OBG-HflX-like GTPase superfamily. OBG GTPase family. As to quaternary structure, monomer. Mg(2+) is required as a cofactor.

The protein localises to the cytoplasm. Functionally, an essential GTPase which binds GTP, GDP and possibly (p)ppGpp with moderate affinity, with high nucleotide exchange rates and a fairly low GTP hydrolysis rate. Plays a role in control of the cell cycle, stress response, ribosome biogenesis and in those bacteria that undergo differentiation, in morphogenesis control. The chain is GTPase Obg from Rhodopseudomonas palustris (strain BisB5).